The chain runs to 180 residues: HTH-type transcriptional regulator EcpR (180 aa).

The 59-residue stretch at 122–180 (KDIKKDKITDREMKIIRMTAQGMQPKSIARIENCSVKTVYTHRRNAEAKLYSKIYKLVQ) folds into the HTH luxR-type domain. Positions 146 to 165 (PKSIARIENCSVKTVYTHRR) form a DNA-binding region, H-T-H motif.

It belongs to the EcpR/MatA family.

It is found in the cytoplasm. Part of the ecpRABCDE operon, which encodes the E.coli common pilus (ECP). ECP plays a dual role in early-stage biofilm development and host cell recognition. Positively regulates the expression of the ecp operon. This Klebsiella pneumoniae subsp. pneumoniae (strain ATCC 700721 / MGH 78578) protein is HTH-type transcriptional regulator EcpR (ecpR).